Consider the following 243-residue polypeptide: VQ motif-containing protein 33 (243 aa).

The span at 1-16 (MEVSTSSMSSKPEQMQ) shows a compositional bias: polar residues. Residues 1–49 (MEVSTSSMSSKPEQMQNPPPMISSPRFQPQIISPHHHDQHQHLSNPYPT) form a disordered region. A VQ motif is present at residues 59 to 68 (FKQVVQMLTG). 2 disordered regions span residues 69 to 98 (SSTD…SIPP) and 138 to 162 (FTGG…SENI). 2 positions are modified to phosphoserine: Ser83 and Ser95. A compositionally biased stretch (polar residues) spans 84 to 98 (PVNNNNKGSSFSIPP). At Thr139 the chain carries Phosphothreonine. Ser148, Ser152, Ser165, Ser167, and Ser178 each carry phosphoserine. The span at 149-162 (PRFSPRNSSSSENI) shows a compositional bias: low complexity. The tract at residues 180–243 (VTPLRSNDDP…FPVASPARNS (64 aa)) is disordered. Position 181 is a phosphothreonine (Thr181). Polar residues predominate over residues 191-201 (NKSSPLSLGNS). Phosphoserine occurs at positions 218 and 221. Residue Thr222 is modified to Phosphothreonine. Ser238 is subject to Phosphoserine.

Phosphorylated on serine and threonine residues by MPK6.

The protein localises to the nucleus. May modulate WRKY transcription factor activities. The chain is VQ motif-containing protein 33 from Arabidopsis thaliana (Mouse-ear cress).